Consider the following 1358-residue polypeptide: MPNDNKTPNRSSTPKFTKKPVTPNDKIPEREEKSNEVKTPKIPLFTFAKSKNYSRPSTAIHTSPHQPSDVKPTSHKQLQQPKSSPLKKNNYNSFPHSNLEKISNSKLLSLLRSKTSAGRIESNNPSHDASRSLASFEQTAFSRHAQQQTSTFNSKPVRTIVPISTSQTNNSFLSGVKSLLSEEKIRDYSKEILGINLANEQPVLEKPLKKGSADIGASVISLTKDKSIRKDTVEEKKEEKLNIGKNFAHSDSLSVPKVSAGDSGISPEESKARSPGIAKPNAIQTEVYGINEESTNERLEINQEKPVKLDENSANSTVASALDTNGTSATTETLTSKKIVPSPKKVAIDQDKITLHDEKTLAPSKHQPITSEQKMKEDADLKRMEILKSPHLSKSPADRPQGRRNSRNFSTRDEETTKLAFLVEYEGQENNYNSTSRSTEKKNDMNTSAKNKNGENKKIGKRPPEIMSTEAHVNKVTEETTKQIQSVRIDGRKVLQKVQGESHIDSRNNTLNVTPSKRPQLGEIPNPMKKHKPNEGRTPNISNGTINIQKKLEPKEIVRDILHTKESSNEAKKTIQNPLNKSQNTALPSTHKVTQKKDIKIGTNDLFQVESAPKISSEIDRENVKSKDEPVSKAVESKSLLNLFSNVLKAPFIKSESKPFSSDALSKEKANFLETIASTEKPENKTDKVSLSQPVSASKHEYSDNFPVSLSQPSKKSFANHTEDEQIEKKKICRGRMNTIITHPGKMELVYVSDSDDSSSDNDSLTDLESLSSGESNEIKVTNDLDTSAEKDQIQAGKWFDPVLDWRKSDRELTKNILWRIADKTTYDKETITDLIEQGIPKHSYLSGNPLTSVTNDICSVENYETSSAFFYQQVHKKDRLQYLPLYAVSTFENTNNTEKNDVTNKNINIGKHSQEQNSSSAKPSQIPTVSSPLGFEETKLSTTPTKSNRRVSHSDTNSSKPKNTKENLSKSSWRQEWLANLKLISVSLVDEFPSELSDSDRQIINEKMQLLKDIFANNLKSAISNNFRESDIIILKGEIEDYPMSSEIKIYYNELQNKPDAKKARFWSFMKTQRFVSNMGFDIQKSCEPVSISTSVKPHVVEPEHMADAKIMPKDILQITKKPLMVKNVKPSSPPDVKSLVQLSTMETKTLPEKKQFDSIFNSNKAKIIPGNGKHASENISLSFSRPASYGYFSVGKRVPIVEDRRVKQLDDITDSNTTEILTSVDVLGTHSQTGTQQSNMYTSTQKTELEIDNKDSVTECSKDMKEDGLSFVDIVLSKAASALDEKEKQLAVANEIIRSLSDEVMRNEIRITSLQGDLTFTKKCLENARSQISEKDAKINKLMEKDFQVNKEIKPY.

Residues 1–15 are compositionally biased toward polar residues; that stretch reads MPNDNKTPNRSSTPK. Disordered stretches follow at residues 1–98, 252–277, 356–466, 498–544, 677–726, 752–787, and 913–970; these read MPND…PHSN, SLSV…SPGI, HDEK…PPEI, VQGE…ISNG, ASTE…EDEQ, VSDS…DLDT, and HSQE…ENLS. Basic and acidic residues predominate over residues 26 to 39; sequence KIPEREEKSNEVKT. Composition is skewed to polar residues over residues 49–66 and 75–96; these read KSKN…SPHQ and HKQL…SFPH. The span at 373 to 388 shows a compositional bias: basic and acidic residues; it reads QKMKEDADLKRMEILK. The segment covering 428–437 has biased composition (polar residues); sequence QENNYNSTSR. Over residues 452–464 the composition is skewed to basic and acidic residues; sequence KNGENKKIGKRPP. The span at 507-517 shows a compositional bias: polar residues; that stretch reads RNNTLNVTPSK. The residue at position 692 (Ser692) is a Phosphoserine. Over residues 706–720 the composition is skewed to polar residues; it reads FPVSLSQPSKKSFAN. The span at 754–766 shows a compositional bias: acidic residues; that stretch reads DSDDSSSDNDSLT. Residues 777–787 show a composition bias toward basic and acidic residues; the sequence is NEIKVTNDLDT. Residues 916–932 are compositionally biased toward polar residues; that stretch reads EQNSSSAKPSQIPTVSS. Lys1128 is covalently cross-linked (Glycyl lysine isopeptide (Lys-Gly) (interchain with G-Cter in SUMO)). A coiled-coil region spans residues 1271-1347; that stretch reads LSFVDIVLSK…DAKINKLMEK (77 aa).

Homodimer. Interacts with MPS3. Interacts with RIS1. Interacts with SIR1, SIR2 and SIR3. Interacts with YKU80. Interacts with UBP10. Interacts with RAP1 (via C-terminus).

The protein localises to the nucleus. The proteins SIR1 through SIR4 are required for transcriptional repression of the silent mating type loci, HML and HMR. The proteins SIR2 through SIR4 repress mulitple loci by modulating chromatin structure. Involves the compaction of chromatin fiber into a more condensed form. In Saccharomyces cerevisiae (strain ATCC 204508 / S288c) (Baker's yeast), this protein is Regulatory protein SIR4 (SIR4).